Reading from the N-terminus, the 329-residue chain is Quinone oxidoreductase (329 aa).

Position 2 is an N-acetylalanine (alanine 2). The residue at position 23 (lysine 23) is an N6-acetyllysine. Residues tyrosine 53, 158 to 161, glycine 181, histidine 200, asparagine 229, 246 to 249, and 269 to 271 contribute to the NADP(+) site; these read SGGV, VGSR, and VTV. Serine 248 bears the Phosphoserine mark. Lysine 296 carries the N6-succinyllysine modification.

The protein belongs to the zinc-containing alcohol dehydrogenase family. Quinone oxidoreductase subfamily. As to quaternary structure, homotetramer.

The protein resides in the cytoplasm. The enzyme catalyses 2 a quinone + NADPH + H(+) = 2 a 1,4-benzosemiquinone + NADP(+). Functionally, does not have alcohol dehydrogenase activity. Binds NADP and acts through a one-electron transfer process. Orthoquinones, such as 1,2-naphthoquinone or 9,10-phenanthrenequinone, are the best substrates (in vitro). May act in the detoxification of xenobiotics. Interacts with (AU)-rich elements (ARE) in the 3'-UTR of target mRNA species and enhances their stability. NADPH binding interferes with mRNA binding. This is Quinone oxidoreductase (CRYZ) from Pongo abelii (Sumatran orangutan).